Here is a 172-residue protein sequence, read N- to C-terminus: Envelope protein UL45 (172 aa).

Over methionine 1–alanine 27 the chain is Intravirion. A helical; Signal-anchor for type II membrane protein transmembrane segment spans residues alanine 28 to valine 48. Over proline 49–proline 172 the chain is Virion surface.

It belongs to the herpesviridae HHV-1 UL45 family.

It localises to the virion membrane. In terms of biological role, important virulence factor of HSV neurotropism. Seems to be required for glycoprotein B-induced fusion. Dispensable for growth in vitro. This is Envelope protein UL45 from Human herpesvirus 1 (strain 17) (HHV-1).